We begin with the raw amino-acid sequence, 455 residues long: Elongation factor Tu, mitochondrial (455 aa).

The N-terminal 46 residues, 1–46 (MTTMAAATLLRATPHFSGLAAGRTFLLQGLLRLLKAPALPLLCRGL), are a transit peptide targeting the mitochondrion. Residues 58–254 (KPHVNVGTIG…AVDTYIPVPA (197 aa)) form the tr-type G domain. The G1 stretch occupies residues 67–74 (GHVDHGKT). Positions 70, 72, 73, 74, and 75 each coordinate GTP. Thr74 provides a ligand contact to Mg(2+). Lys82 bears the N6-acetyllysine mark. Lys91 is subject to N6-acetyllysine; alternate. Lys91 bears the N6-succinyllysine; alternate mark. The G2 stretch occupies residues 108–112 (GITIN). A G3 region spans residues 129–132 (DCPG). GTP is bound by residues Asn184, Asp187, Ser222, Ala223, and Leu224. The tract at residues 184–187 (NKAD) is G4. A G5 region spans residues 222–224 (SAL). Lys237 bears the N6-succinyllysine mark. N6-acetyllysine is present on Lys259. Residue Thr281 is modified to Phosphothreonine. Lys289 carries the post-translational modification N6-succinyllysine. Position 315 is a phosphoserine (Ser315). N6-acetyllysine occurs at positions 364 and 421.

This sequence belongs to the TRAFAC class translation factor GTPase superfamily. Classic translation factor GTPase family. EF-Tu/EF-1A subfamily. In terms of assembly, interacts with NLRX1. Interacts with ATG16L1. (Microbial infection) Interacts with human parainfluenza virus 3 matrix protein; this interaction inhibits RLR-mediated type I interferon production while promoting autophagy. As to quaternary structure, (Microbial infection) Interacts with Hantaan hantavirus glycoprotein N; this interaction contributes to the virus-induced degradation of mitochondria by autophagy, which leads to degradation of MAVS and inhibition of type I interferon (IFN) responses.

Its subcellular location is the mitochondrion. The enzyme catalyses GTP + H2O = GDP + phosphate + H(+). In terms of biological role, GTP hydrolase that promotes the GTP-dependent binding of aminoacyl-tRNA to the A-site of ribosomes during protein biosynthesis. Also plays a role in the regulation of autophagy and innate immunity. Recruits ATG5-ATG12 and NLRX1 at mitochondria and serves as a checkpoint of the RIGI-MAVS pathway. In turn, inhibits RLR-mediated type I interferon while promoting autophagy. The polypeptide is Elongation factor Tu, mitochondrial (TUFM) (Homo sapiens (Human)).